Here is a 154-residue protein sequence, read N- to C-terminus: Cyanate hydratase (154 aa).

Residues R100, E103, and S126 contribute to the active site.

It belongs to the cyanase family.

It catalyses the reaction cyanate + hydrogencarbonate + 3 H(+) = NH4(+) + 2 CO2. In terms of biological role, catalyzes the reaction of cyanate with bicarbonate to produce ammonia and carbon dioxide. The protein is Cyanate hydratase of Aspergillus clavatus (strain ATCC 1007 / CBS 513.65 / DSM 816 / NCTC 3887 / NRRL 1 / QM 1276 / 107).